A 293-amino-acid chain; its full sequence is Ribosomal RNA small subunit methyltransferase H (293 aa).

S-adenosyl-L-methionine-binding positions include 32 to 34 (GGH), Asp51, Phe78, Asp99, and Gln106. The tract at residues 272–293 (SDEEIKENPASRSAKLRVGRRI) is disordered.

This sequence belongs to the methyltransferase superfamily. RsmH family.

The protein localises to the cytoplasm. It carries out the reaction cytidine(1402) in 16S rRNA + S-adenosyl-L-methionine = N(4)-methylcytidine(1402) in 16S rRNA + S-adenosyl-L-homocysteine + H(+). In terms of biological role, specifically methylates the N4 position of cytidine in position 1402 (C1402) of 16S rRNA. This is Ribosomal RNA small subunit methyltransferase H from Sulfurihydrogenibium sp. (strain YO3AOP1).